The chain runs to 597 residues: Period protein homolog lin-42 (597 aa).

Positions 1-44 (MEPAGHSSATHNIVVPNANPTQPQPLAPAMREEGATLSPPNTWS) are disordered. Residues 155–223 (LQASHVSSNF…VRQAHIDLHN (69 aa)) enclose the PAS domain. 4 disordered regions span residues 313-335 (PVPSTSRHSHHHHHSSLKDQNQG), 418-450 (KSQSRPESPAKQDEPFDEKKYPPQTPLTREALT), 473-509 (DDVPSSPPAKRTTPIHWTSSSQNHYRTMAPAPPPPPG), and 555-597 (DGLL…DSQN). Over residues 425–438 (SPAKQDEPFDEKKY) the composition is skewed to basic and acidic residues. The segment covering 487–497 (IHWTSSSQNHY) has biased composition (polar residues). Residues 561–577 (GATSTGGASPTSGTNSP) are compositionally biased toward low complexity.

The protein resides in the nucleus. It is found in the cytoplasm. Transcriptional repressor which interacts with the promoter region of target genes. Has a specific role in developmental timing where it regulates temporal expression of a number of miRNAs and mRNAs. Controls temporal cell fate transition during embryonic and early larval development by restricting the expression of specific miRNAs, including let-7, miR-48, lin-4, miR-35 and miR-58. Restricts the accumulation of lin-29 in the hypodermis to the larval L4 stage, thus controlling terminal differentiation of seam cells. Has a role in the miRNA-mediated specification of asymmetric gene expression patterns in gustatory neurons. May also regulate genes involved in other biological processes including transport, small molecule metabolism, and growth. Inhibits dauer formation, by antagonizing daf-12. In terms of biological role, specifically required for maintaining the timing of larval development and molting cycle rhythms. The sequence is that of Period protein homolog lin-42 from Caenorhabditis elegans.